Here is a 189-residue protein sequence, read N- to C-terminus: Myb-like protein T (189 aa).

Residues 121–172 form the Myb-like domain; the sequence is NWSPDEQKALMVEVSTLGNKSEINWFFISQQLFLKGISRNARECQRKHESIQ.

The polypeptide is Myb-like protein T (mybT) (Dictyostelium discoideum (Social amoeba)).